Reading from the N-terminus, the 261-residue chain is Thiamine thiazole synthase (261 aa).

NAD(+) is bound by residues Ser40, 59–60 (ER), Gly67, Val133, and 159–161 (HID). The Fe cation site is built by Asp161 and His176. The NAD(+) site is built by Ser179 and Met226. Arg236 is a glycine binding site.

This sequence belongs to the THI4 family. In terms of assembly, homooctamer; tetramer of dimers. Fe(2+) is required as a cofactor.

It catalyses the reaction hydrogen sulfide + glycine + NAD(+) = ADP-5-ethyl-4-methylthiazole-2-carboxylate + nicotinamide + 3 H2O + H(+). It participates in cofactor biosynthesis; thiamine diphosphate biosynthesis. Functionally, involved in the biosynthesis of the thiazole moiety of thiamine. Catalyzes the conversion of NAD and glycine to adenosine diphosphate 5-(2-hydroxyethyl)-4-methylthiazole-2-carboxylate (ADT), an adenylated thiazole intermediate, using free sulfide as a source of sulfur. The protein is Thiamine thiazole synthase of Methanococcus maripaludis (strain C5 / ATCC BAA-1333).